A 1405-amino-acid chain; its full sequence is Protein crumbs homolog 1 (1405 aa).

Positions 1 to 27 (MKLKRTAYLLFLYLSSSLLICIKNSFC) are cleaved as a signal peptide. Topologically, residues 28 to 1339 (NKNNTRCLSG…RCELDLADDR (1312 aa)) are extracellular. Residues 30–67 (NNTRCLSGPCQNNSTCKHFPQDNNCCLDTANNLDKDCE) enclose the EGF-like 1; atypical domain. 33 disulfide bridges follow: Cys-34/Cys-45, Cys-39/Cys-54, Cys-55/Cys-66, Cys-73/Cys-84, Cys-78/Cys-95, Cys-97/Cys-106, Cys-113/Cys-124, Cys-118/Cys-133, Cys-135/Cys-144, Cys-151/Cys-162, Cys-156/Cys-171, Cys-173/Cys-182, Cys-189/Cys-200, Cys-194/Cys-209, Cys-211/Cys-220, Cys-227/Cys-238, Cys-232/Cys-247, Cys-249/Cys-258, Cys-265/Cys-276, Cys-270/Cys-285, Cys-287/Cys-297, Cys-304/Cys-315, Cys-309/Cys-324, Cys-326/Cys-335, Cys-342/Cys-353, Cys-347/Cys-382, Cys-384/Cys-393, Cys-400/Cys-411, Cys-405/Cys-420, Cys-422/Cys-437, Cys-444/Cys-455, Cys-449/Cys-468, and Cys-470/Cys-479. The N-linked (GlcNAc...) asparagine glycan is linked to Asn-41. EGF-like domains lie at 69 to 107 (LKDP…LNCE) and 109 to 145 (ATNS…RFCE). The EGF-like 4; calcium-binding domain occupies 147 to 183 (DHNECASSPCHNGAMCQDGINGYSCFCVPGYQGRHCD). An EGF-like 5; calcium-binding domain is found at 185 to 221 (EVDECVSDPCKNEAVCLNEIGRYTCVCPQEFSGVNCE). The region spanning 223–259 (EIDECRSQPCLHGATCQDAPGGYSCDCAPGFLGEHCE) is the EGF-like 6; calcium-binding domain. EGF-like domains lie at 261-298 (SVNE…MHCE), 300-336 (LIPL…ALCE), 338-394 (DINE…IHCE), 396-438 (DVDE…ENCS), and 440-480 (ILLG…PLCE). Residues 482 to 669 (VTTLSFGSNG…GLSSNVKAGC (188 aa)) form the Laminin G-like 1 domain. N-linked (GlcNAc...) asparagine glycosylation is found at Asn-560 and Asn-656. 4 disulfides stabilise this stretch: Cys-641-Cys-669, Cys-675-Cys-686, Cys-680-Cys-695, and Cys-697-Cys-706. Positions 671–707 (GKDWCESQPCQNRGRCINLWQGYQCECDRPYTGSNCL) constitute an EGF-like 12 domain. The Laminin G-like 2 domain occupies 713-884 (GRFGQDDSTG…PILVNVTQGC (172 aa)). N-linked (GlcNAc...) asparagine glycosylation is found at Asn-756 and Asn-879. 6 cysteine pairs are disulfide-bonded: Cys-850-Cys-884, Cys-890-Cys-901, Cys-895-Cys-910, Cys-912-Cys-921, Cys-927-Cys-938, and Cys-932-Cys-947. 2 consecutive EGF-like domains span residues 886–922 (GDNT…RACE) and 923–959 (QVQW…LSRE). The region spanning 950–1136 (NAVFSGLSRE…VSTNMVLTGC (187 aa)) is the Laminin G-like 3 domain. N-linked (GlcNAc...) asparagine glycosylation is found at Asn-967, Asn-974, and Asn-999. 16 disulfides stabilise this stretch: Cys-1095–Cys-1136, Cys-1142–Cys-1153, Cys-1147–Cys-1162, Cys-1164–Cys-1173, Cys-1180–Cys-1190, Cys-1185–Cys-1199, Cys-1201–Cys-1210, Cys-1217–Cys-1228, Cys-1222–Cys-1237, Cys-1239–Cys-1248, Cys-1258–Cys-1273, Cys-1267–Cys-1282, Cys-1284–Cys-1293, Cys-1300–Cys-1311, Cys-1305–Cys-1320, and Cys-1322–Cys-1331. The EGF-like 15 domain maps to 1138 to 1174 (PSNACHSSPCLHGGNCEDSYSSYRCACLSGWSGTHCE). The region spanning 1176–1211 (NIDECFSSPCIHGNCSDGVAAYHCRCEPGYTGVNCE) is the EGF-like 16; calcium-binding domain. N-linked (GlcNAc...) asparagine glycosylation occurs at Asn-1189. EGF-like domains are found at residues 1213–1249 (DVDN…RFCR) and 1254–1294 (PSTV…EWCE). 2 N-linked (GlcNAc...) asparagine glycosylation sites follow: Asn-1242 and Asn-1264. One can recognise an EGF-like 19; calcium-binding domain in the interval 1296–1332 (DINECASDPCINGGLCRDLVNRFLCICDVAFAGERCE). The chain crosses the membrane as a helical span at residues 1340–1360 (LLGIFTAVGSGTLALFFILLL). At 1361-1405 (AGVASLIASNKRATQGTYSPSGQEKAGPRVEMWIRMPPPALERLI) the chain is on the cytoplasmic side.

It belongs to the Crumbs protein family. As to quaternary structure, component of a complex composed of PALS1, CRB1 and EPB41L5. Within the complex, interacts (via intracellular domain) with PALS1 and EPB41L5 (via FERM domain). Forms a complex with MPP4 and PALS1. Interacts with MPDZ/MUPP1 and MPP4. Post-translationally, glycosylated. Expressed in the kidney, lung, stomach and testis. Expressed in the brain. Expressed in the retina of the eye. Expressed in the outer nuclear layer, photoreceptor layer and inner nuclear layer of the retina. Expressed in Mueller cell radial processes in the inner nuclear layer, in apical processes sclerad to the external limiting membrane, and in the subapical region, adjacent to the adherens junction of retinal photoreceptors. In the brain, expressed in the granular layer of the cerebellum, the hippocampal dentate gyrus, the olfactory bulbs, the subventricular region lining the telencephalic ventricles and the rostral migratory stream. As to expression, ubiquitously expressed.

The protein resides in the apical cell membrane. Its subcellular location is the secreted. It localises to the cell projection. It is found in the cilium. The protein localises to the photoreceptor outer segment. The protein resides in the photoreceptor inner segment. Its subcellular location is the cytoplasm. It localises to the cell junction. It is found in the focal adhesion. Plays a role in photoreceptor morphogenesis in the retina. May maintain cell polarization and adhesion. Its function is as follows. May play a role in epidermal tissue morphogenesis. May function in cell attachment for stratified epithelial organization. The chain is Protein crumbs homolog 1 (Crb1) from Mus musculus (Mouse).